A 211-amino-acid chain; its full sequence is Endo-1,4-beta-xylanase 4 (211 aa).

The N-terminal stretch at 1-16 (MKVTAAFAGLLVTAFA) is a signal peptide. The region spanning 19–210 (VPEPVLVSRS…GACSASVTIS (192 aa)) is the GH11 domain. Asparagine 101 is a glycosylation site (N-linked (GlcNAc...) asparagine). The active-site Nucleophile is the glutamate 106. The active-site Proton donor is the glutamate 197.

It belongs to the glycosyl hydrolase 11 (cellulase G) family.

It is found in the secreted. It catalyses the reaction Endohydrolysis of (1-&gt;4)-beta-D-xylosidic linkages in xylans.. Its pathway is glycan degradation; xylan degradation. In terms of biological role, endo-1,4-beta-xylanase involved in the hydrolysis of xylan, a major structural heterogeneous polysaccharide found in plant biomass representing the second most abundant polysaccharide in the biosphere, after cellulose. The chain is Endo-1,4-beta-xylanase 4 (XYN4) from Aspergillus niger.